Consider the following 248-residue polypeptide: NADH dehydrogenase [ubiquinone] flavoprotein 2, mitochondrial (248 aa).

The N-terminal 31 residues, 1 to 31 (MFSLALRARASGLTAQWGRHARNLHKTAVQN), are a transit peptide targeting the mitochondrion. [2Fe-2S] cluster contacts are provided by C134, C139, C175, and C179. Y192 is subject to Phosphotyrosine; by SRC. A disordered region spans residues 229 to 248 (GLTSLTEPPKGPGFGVQAGL).

The protein belongs to the complex I 24 kDa subunit family. In terms of assembly, core subunit of respiratory chain NADH dehydrogenase (Complex I) which is composed of 45 different subunits. This is a component of the flavoprotein-sulfur (FP) fragment of the enzyme. [2Fe-2S] cluster serves as cofactor.

It is found in the mitochondrion inner membrane. It catalyses the reaction a ubiquinone + NADH + 5 H(+)(in) = a ubiquinol + NAD(+) + 4 H(+)(out). In terms of biological role, core subunit of the mitochondrial membrane respiratory chain NADH dehydrogenase (Complex I) which catalyzes electron transfer from NADH through the respiratory chain, using ubiquinone as an electron acceptor. Parts of the peripheral arm of the enzyme, where the electrons from NADH are accepted by flavin mononucleotide (FMN) and then passed along a chain of iron-sulfur clusters by electron tunnelling to the final acceptor ubiquinone. Contains one iron-sulfur cluster. This is NADH dehydrogenase [ubiquinone] flavoprotein 2, mitochondrial from Rattus norvegicus (Rat).